We begin with the raw amino-acid sequence, 114 residues long: MADTGYYAGYQDDVDVDEQKRHQALYLIGIILLVTVCLTVLWVCIMLACYVPGFLKKTLEAWLNSSSLMKRRVASTLTRTPFEATGPERERNWEARRQSTTVNPASQPNTGSVF.

A helical membrane pass occupies residues 27–47 (LIGIILLVTVCLTVLWVCIML). The tract at residues 79-114 (RTPFEATGPERERNWEARRQSTTVNPASQPNTGSVF) is disordered. The span at 86–97 (GPERERNWEARR) shows a compositional bias: basic and acidic residues. A compositionally biased stretch (polar residues) spans 98–114 (QSTTVNPASQPNTGSVF).

The protein belongs to the nanovirus movement protein family.

It is found in the host cell membrane. Its function is as follows. May transport viral genome to neighboring plant cells directly through plasmosdesmata, without any budding. The movement protein allows efficient cell to cell propagation, by bypassing the host cell wall barrier. This Faba bean necrotic yellows virus (isolate Egyptian EV1-93) (FBNYV) protein is Putative movement protein (DNA-M).